The primary structure comprises 226 residues: Ribose-5-phosphate isomerase A (226 aa).

Substrate-binding positions include 28–31 (TGST), 80–83 (DGAD), and 93–96 (KGGG). Glu102 functions as the Proton acceptor in the catalytic mechanism. Lys120 contributes to the substrate binding site.

The protein belongs to the ribose 5-phosphate isomerase family. As to quaternary structure, homodimer.

The catalysed reaction is aldehydo-D-ribose 5-phosphate = D-ribulose 5-phosphate. It participates in carbohydrate degradation; pentose phosphate pathway; D-ribose 5-phosphate from D-ribulose 5-phosphate (non-oxidative stage): step 1/1. Its function is as follows. Catalyzes the reversible conversion of ribose-5-phosphate to ribulose 5-phosphate. This chain is Ribose-5-phosphate isomerase A, found in Caulobacter sp. (strain K31).